Here is a 1480-residue protein sequence, read N- to C-terminus: MLLQDVHHREQLDDDVENAFSKINGTARQASPFADEPSIDVPSTHLPVVTPRSKTANDRTGLAKSLPYASLGASRSTIDEQDVLIQTWAILLHQYAVSDTVAFAIIGKSDPSGYSGRRASTQVVCLPHLFLDSARATPHAPAVHGWDGRLTYAELDQLSNSVARQLLRRGVRKGQFVPFSFEKSIWMVVAIIGILRAGGVVASIDPSQPQSRAREIIQETGATVIVASTAQASVFAGLVDTVVPIADDTVHPAANDTGLHPSLPPVHPEDPAVVIFTSGSTGKPKGIVIQHGAVTTRMVAEGRAFQYHGARTLQFAASTWDIFMTDIFTTLAFNGCVCIPSEEDRRFNLARFCAEYDVSLALITPSLANLLEPTGFPTLKTLIFGGEALKEEVTRKWEAVDGISLHQGYGPAETGPCVAGRLAERPEILGYALDNSVCVLVDPSNPNRLVPLGAVGELVVGGPSLLREYINDPRKTEAAVIENPPWALDLMTPVRRFYRTGDLLRYSVDTLDGRLEFVGRTDDQVKYHGQRIELGEIEHHLSRLPGVEACVVVLAKAGFFKDRLVAVVQAGKSSGGSSYGTQLSLRSDPNITITHMRRFLSSRLPEFMIPNELLVVQELPHNNSMKLDRGRVAKWVADMQSQPSEAVPKPHTRGNELLAHESTARTIAREYARIVAGDSVARRREYEDRDFNLQEGGIDSIQIMSLSMFLTEHFGFQVPMADILSSRATVRSIASLIDANSSPGRGQPLNTQETARLPLRSNGPAPSQQALERNGSRVFLTGASGFLGIEILRQLLARPKTHVYALVRGSSESQARERLVQKAISAGWWQDAYRTRLHVWHGDLTQPQLGLSQLQWQMLQGKASPSIDAIIHNGAKVHYSQDYETLKKTNVSPTVELLKAVHDREEPLHSFVFVSGGQQLSFDDREDEKNAAKSLKGSGYARSKAVSEQIVRRFANQKGSKARHVRIVKPGFIIGDAERGLANQSDFIWRLIAACVELGFYNGDEADSWLFISDITRVAQVILHSVFEDDSQPVTKVLDGLRFKTLWALLQDKFGFELQPLSRREWLARLKHSVATKKEKHVLLREQFPALHHGVVPFNNAAGTVVHREAAESTHRYMTSFPYELGRDDPASAAKTQRLQDRFAELAAFMNADPDEIAFGQSTTFLLRSLGQALKPLLNSDCEIIVSILCHEGSAAAWVALAKDLGIAIKWWAPPPGDDPVLSLDTLRPLLTPKTRLVACNHVSNVVGTIHPIRQVADLVHRIPGAVLVVDGVAWAPHRPIDVKALDVDFYCFSWYKVFGPHVAQLYGRRSAQKRALAGISHFFLSEMPGLDWRLRLGANSFELEEALVPITRYLKRVGWDNIIAQETVLQDVFLAYLRRRPRVFRIFGEQSSDPAKRVPVITFEVIGHSSTVVANKVNQRGRFRVVSGNCWAPRPTHDVLGLGADGLIRVSFVHYNTVAEVQEFCTELDSVLETLNAGI.

Residues 31–59 are disordered; the sequence is SPFADEPSIDVPSTHLPVVTPRSKTANDR. Positions 132 to 527 are adenylation domain; the sequence is DSARATPHAP…VGRTDDQVKY (396 aa). Positions 662 to 741 constitute a Carrier domain; that stretch reads STARTIAREY…SIASLIDANS (80 aa). Ser-700 is subject to O-(pantetheine 4'-phosphoryl)serine. A compositionally biased stretch (polar residues) spans 739–754; it reads ANSSPGRGQPLNTQET. Residues 739–773 form a disordered region; it reads ANSSPGRGQPLNTQETARLPLRSNGPAPSQQALER. Positions 780–1003 are NAD-binding domain; sequence LTGASGFLGI…ACVELGFYNG (224 aa). An aminotransferase domain region spans residues 1100-1465; the sequence is NAAGTVVHRE…YNTVAEVQEF (366 aa).

The protein belongs to the NRP synthetase family.

It functions in the pathway secondary metabolite biosynthesis. Nonribosomal peptide synthetase-like enzyme; part of the gene cluster that mediates the biosynthesis of the isoquinoline alkaloids fumisoquin A, fumisoquin B and fumisoquin C; as well as small amounts of fumipyrrole as a shunt metabolite. The products of the cluster lead to a brown coloration and are important for growth and conidiation. The nonribosomal peptide synthetase-like protein fsqF, which lacks a canonical condensation domain, is required for addition of a serine-derived dehydroalanine moiety to activated tyrosine but is not essential for the subsequent steps leading to isoquinoline formation. A different enzyme, most likely the ATP-grasp enzyme fsqD, is responsible for activation of tyrosine. Three additional enzymes encoded by the fsq cluster, the N-methyltransferase fsqC, the phenol 2-monooxygenase fsqG and the FAD-dependent oxidase fsqB, catalyze the formation of the isoquinoline ring system in the fumisoquins. FsqB converts the fspF thiolation domain-bound (2S,4S,5S)-2-amino-6-(3,4-dihydroxyphenyl)-4-hydroxy-5-(methylamino)hexanoyl into isoquinoline. The cyclization most likely proceeds via a two-step mechanism, beginning with FAD-dependent oxidation of the methyl group to an iminium species followed by electrophilic attack on the deprotonated phenol. The chain is Nonribosomal peptide synthetase-like enzyme fsqF from Aspergillus fumigatus (strain ATCC MYA-4609 / CBS 101355 / FGSC A1100 / Af293) (Neosartorya fumigata).